The following is a 391-amino-acid chain: Chalcone synthase (391 aa).

The active site involves Cys164.

It belongs to the thiolase-like superfamily. Chalcone/stilbene synthases family.

It catalyses the reaction (E)-4-coumaroyl-CoA + 3 malonyl-CoA + 3 H(+) = 2',4,4',6'-tetrahydroxychalcone + 3 CO2 + 4 CoA. Its pathway is secondary metabolite biosynthesis; flavonoid biosynthesis. In terms of biological role, the primary product of this enzyme is 4,2',4',6'-tetrahydroxychalcone (also termed naringenin-chalcone or chalcone) which can under specific conditions spontaneously isomerize into naringenin. In Dianthus monspessulanus, this protein is Chalcone synthase (CHS).